The chain runs to 743 residues: Dystrobrevin alpha (743 aa).

Residues 1-288 (MIEDSGKRGN…SHSNQHQMKE (288 aa)) are interaction with MAGEE1. The ZZ-type zinc-finger motif lies at 238–294 (FHPVECSYCHSESMMGFRYRCQQCHNYQLCQDCFWRGHAGGSHSNQHQMKEYTSWKS). The Zn(2+) site is built by cysteine 243, cysteine 246, cysteine 258, cysteine 261, cysteine 267, cysteine 270, histidine 280, and histidine 284. Residues 400–450 (DRLADEHVLIGLYVNMLRNNPSCMLESSNRLDEEHRLIARYAARLAAESSS) form a syntrophin-binding region region. Positions 461-556 (DISFTIDANK…EGLMKLLKTQ (96 aa)) form a coiled coil. A disordered region spans residues 556–575 (QGAGSPRSSPSHTISRPIPM). Polar residues predominate over residues 557 to 569 (GAGSPRSSPSHTI). Serine 662 carries the post-translational modification Phosphoserine.

The protein belongs to the dystrophin family. Dystrobrevin subfamily. As to quaternary structure, interacts with dystrophin, utrophin and the syntrophins SNTA1, SNTB1, SNTB2, SNTG1 and SNTG2. Interacts with MAGEE1. Binds dystrobrevin binding protein 1. Interacts with CTNNAL1. The interaction is required for correct localization of both CTNNAL1 and DTNA. Does not interact with dystrophin. In terms of processing, phosphorylation of DTN-1 on tyrosine kinase substrate domain present in the C-terminus. In terms of tissue distribution, highly expressed in brain, skeletal and cardiac muscles, and expressed at lower levels in lung, liver and pancreas. Isoform 2 is not expressed in cardiac muscle. Isoform 7 and isoform 8 are only expressed in muscle.

Its subcellular location is the cytoplasm. The protein localises to the synapse. It is found in the cell membrane. Its function is as follows. May be involved in the formation and stability of synapses as well as being involved in the clustering of nicotinic acetylcholine receptors. This is Dystrobrevin alpha from Homo sapiens (Human).